A 226-amino-acid polypeptide reads, in one-letter code: 2-C-methyl-D-erythritol 4-phosphate cytidylyltransferase (226 aa).

It belongs to the IspD/TarI cytidylyltransferase family. IspD subfamily.

It carries out the reaction 2-C-methyl-D-erythritol 4-phosphate + CTP + H(+) = 4-CDP-2-C-methyl-D-erythritol + diphosphate. Its pathway is isoprenoid biosynthesis; isopentenyl diphosphate biosynthesis via DXP pathway; isopentenyl diphosphate from 1-deoxy-D-xylulose 5-phosphate: step 2/6. Catalyzes the formation of 4-diphosphocytidyl-2-C-methyl-D-erythritol from CTP and 2-C-methyl-D-erythritol 4-phosphate (MEP). The protein is 2-C-methyl-D-erythritol 4-phosphate cytidylyltransferase of Actinobacillus pleuropneumoniae serotype 7 (strain AP76).